We begin with the raw amino-acid sequence, 508 residues long: Flavonoid 3'-monooxygenase CYP75B137 (508 aa).

Residues 2-22 (LTFFFLWISTLLLSSFIVYLL) form a helical membrane-spanning segment. A heme-binding site is contributed by cysteine 445.

Belongs to the cytochrome P450 family. Heme serves as cofactor. As to expression, expressed in young cromes.

It localises to the membrane. The enzyme catalyses a 3'-unsubstituted flavone + reduced [NADPH--hemoprotein reductase] + O2 = a 3'-hydroxyflavone + oxidized [NADPH--hemoprotein reductase] + H2O + H(+). The catalysed reaction is (2S)-naringenin + reduced [NADPH--hemoprotein reductase] + O2 = (S)-eriodictyol + oxidized [NADPH--hemoprotein reductase] + H2O + H(+). It carries out the reaction (2R,3R)-dihydrokaempferol + reduced [NADPH--hemoprotein reductase] + O2 = (2R,3R)-dihydroquercetin + oxidized [NADPH--hemoprotein reductase] + H2O + H(+). It catalyses the reaction kaempferol + reduced [NADPH--hemoprotein reductase] + O2 = quercetin + oxidized [NADPH--hemoprotein reductase] + H2O + H(+). The protein operates within flavonoid metabolism. Functionally, flavonoid 3'-hydroxylase that catalyzes the 3'-hydroxylation of flavanones, dihydroflavonols and flavonols. Converts narigenin to eriodictyol, dihydrokaempferol to dihydroquercetin and kaempferol to quercetin. The polypeptide is Flavonoid 3'-monooxygenase CYP75B137 (Crocosmia x crocosmiiflora (Montbretia)).